A 108-amino-acid polypeptide reads, in one-letter code: ATP-dependent Clp protease adapter protein ClpS (108 aa).

The protein belongs to the ClpS family. Binds to the N-terminal domain of the chaperone ClpA.

Functionally, involved in the modulation of the specificity of the ClpAP-mediated ATP-dependent protein degradation. In Ralstonia pickettii (strain 12J), this protein is ATP-dependent Clp protease adapter protein ClpS.